The primary structure comprises 39 residues: Glutenin, high molecular weight subunit PC237 (39 aa).

This sequence belongs to the gliadin/glutenin family. Disulfide-bridge linked aggregates.

In terms of biological role, glutenins are high-molecular weight seed storage proteins of wheat endosperm. Thought to be responsible for the visco-elastic property of wheat dough. This Triticum aestivum (Wheat) protein is Glutenin, high molecular weight subunit PC237.